A 336-amino-acid chain; its full sequence is N-acetyl-gamma-glutamyl-phosphate reductase (336 aa).

Cysteine 143 is an active-site residue.

This sequence belongs to the NAGSA dehydrogenase family. Type 1 subfamily.

It localises to the cytoplasm. The catalysed reaction is N-acetyl-L-glutamate 5-semialdehyde + phosphate + NADP(+) = N-acetyl-L-glutamyl 5-phosphate + NADPH + H(+). It functions in the pathway amino-acid biosynthesis; L-arginine biosynthesis; N(2)-acetyl-L-ornithine from L-glutamate: step 3/4. In terms of biological role, catalyzes the NADPH-dependent reduction of N-acetyl-5-glutamyl phosphate to yield N-acetyl-L-glutamate 5-semialdehyde. The polypeptide is N-acetyl-gamma-glutamyl-phosphate reductase (Dictyoglomus thermophilum (strain ATCC 35947 / DSM 3960 / H-6-12)).